The primary structure comprises 258 residues: UPF0246 protein VS_0505 (258 aa).

Belongs to the UPF0246 family.

The protein is UPF0246 protein VS_0505 of Vibrio atlanticus (strain LGP32) (Vibrio splendidus (strain Mel32)).